The sequence spans 445 residues: FAS-associated factor 2-A (445 aa).

The UBA domain maps to 12-53 (EQTEKLLQFQDLTGIESMDQCRQTLQQHNWNIEAAVQDRLNE). The stretch at 275–353 (SERLEREERN…ERKSECLPAE (79 aa)) forms a coiled coil. The disordered stretch occupies residues 302–354 (RADQEKERKKKEKQEQKRREEEEAQRKQMLEERKKRNLEEEKERKSECLPAEP). Residues 303–348 (ADQEKERKKKEKQEQKRREEEEAQRKQMLEERKKRNLEEEKERKSE) are compositionally biased toward basic and acidic residues. The UBX domain maps to 357 to 439 (DHPDNVKIIF…GLSQSQLLFV (83 aa)).

It is found in the cytoplasm. The protein localises to the lipid droplet. It localises to the endoplasmic reticulum. Plays an important role in endoplasmic reticulum-associated degradation (ERAD) that mediates ubiquitin-dependent degradation of misfolded endoplasmic reticulum proteins. Involved in inhibition of lipid droplet degradation. Involved in stress granule disassembly. This chain is FAS-associated factor 2-A (faf2-a), found in Xenopus laevis (African clawed frog).